Reading from the N-terminus, the 233-residue chain is EEF1A lysine methyltransferase 2 (233 aa).

The protein belongs to the class I-like SAM-binding methyltransferase superfamily. EFM4 family.

Its subcellular location is the cytoplasm. It localises to the nucleus. The enzyme catalyses L-lysyl-[protein] + 3 S-adenosyl-L-methionine = N(6),N(6),N(6)-trimethyl-L-lysyl-[protein] + 3 S-adenosyl-L-homocysteine + 3 H(+). Its function is as follows. Protein-lysine methyltransferase that selectively catalyzes the trimethylation of EEF1A at 'Lys-318'. The protein is EEF1A lysine methyltransferase 2 of Danio rerio (Zebrafish).